The following is an 876-amino-acid chain: Alanine--tRNA ligase (876 aa).

Positions 568, 572, 669, and 673 each coordinate Zn(2+).

The protein belongs to the class-II aminoacyl-tRNA synthetase family. Requires Zn(2+) as cofactor.

It localises to the cytoplasm. It carries out the reaction tRNA(Ala) + L-alanine + ATP = L-alanyl-tRNA(Ala) + AMP + diphosphate. In terms of biological role, catalyzes the attachment of alanine to tRNA(Ala) in a two-step reaction: alanine is first activated by ATP to form Ala-AMP and then transferred to the acceptor end of tRNA(Ala). Also edits incorrectly charged Ser-tRNA(Ala) and Gly-tRNA(Ala) via its editing domain. The chain is Alanine--tRNA ligase from Sulfurihydrogenibium sp. (strain YO3AOP1).